A 311-amino-acid polypeptide reads, in one-letter code: Pyrimidine-specific ribonucleoside hydrolase RihA (311 aa).

The active site involves histidine 240.

Belongs to the IUNH family. RihA subfamily.

Its function is as follows. Hydrolyzes with equal efficiency cytidine or uridine to ribose and cytosine or uracil, respectively. The sequence is that of Pyrimidine-specific ribonucleoside hydrolase RihA from Escherichia coli O17:K52:H18 (strain UMN026 / ExPEC).